The chain runs to 422 residues: UDP-N-acetylglucosamine 1-carboxyvinyltransferase (422 aa).

22-23 (KN) is a phosphoenolpyruvate binding site. Arg93 contributes to the UDP-N-acetyl-alpha-D-glucosamine binding site. Cys117 (proton donor) is an active-site residue. Cys117 carries the 2-(S-cysteinyl)pyruvic acid O-phosphothioketal modification. UDP-N-acetyl-alpha-D-glucosamine contacts are provided by residues 122 to 126 (RPVDL), Asp308, and Leu330.

It belongs to the EPSP synthase family. MurA subfamily.

It localises to the cytoplasm. The catalysed reaction is phosphoenolpyruvate + UDP-N-acetyl-alpha-D-glucosamine = UDP-N-acetyl-3-O-(1-carboxyvinyl)-alpha-D-glucosamine + phosphate. The protein operates within cell wall biogenesis; peptidoglycan biosynthesis. In terms of biological role, cell wall formation. Adds enolpyruvyl to UDP-N-acetylglucosamine. In Helicobacter acinonychis (strain Sheeba), this protein is UDP-N-acetylglucosamine 1-carboxyvinyltransferase.